Consider the following 205-residue polypeptide: Imidazole glycerol phosphate synthase subunit HisH (205 aa).

The region spanning 3-205 (KIGLIDYGMG…LLRRWLSNIQ (203 aa)) is the Glutamine amidotransferase type-1 domain. Residue C81 is the Nucleophile of the active site. Active-site residues include H185 and E187.

In terms of assembly, heterodimer of HisH and HisF.

It is found in the cytoplasm. It catalyses the reaction 5-[(5-phospho-1-deoxy-D-ribulos-1-ylimino)methylamino]-1-(5-phospho-beta-D-ribosyl)imidazole-4-carboxamide + L-glutamine = D-erythro-1-(imidazol-4-yl)glycerol 3-phosphate + 5-amino-1-(5-phospho-beta-D-ribosyl)imidazole-4-carboxamide + L-glutamate + H(+). The catalysed reaction is L-glutamine + H2O = L-glutamate + NH4(+). It functions in the pathway amino-acid biosynthesis; L-histidine biosynthesis; L-histidine from 5-phospho-alpha-D-ribose 1-diphosphate: step 5/9. In terms of biological role, IGPS catalyzes the conversion of PRFAR and glutamine to IGP, AICAR and glutamate. The HisH subunit catalyzes the hydrolysis of glutamine to glutamate and ammonia as part of the synthesis of IGP and AICAR. The resulting ammonia molecule is channeled to the active site of HisF. This is Imidazole glycerol phosphate synthase subunit HisH from Prochlorococcus marinus (strain MIT 9312).